Reading from the N-terminus, the 60-residue chain is Large ribosomal subunit protein bL32 (60 aa).

It belongs to the bacterial ribosomal protein bL32 family.

This chain is Large ribosomal subunit protein bL32, found in Geobacter sulfurreducens (strain ATCC 51573 / DSM 12127 / PCA).